A 431-amino-acid chain; its full sequence is Adenylosuccinate synthetase (431 aa).

GTP-binding positions include 13–19 and 41–43; these read GDEGKGK and GHT. Aspartate 14 acts as the Proton acceptor in catalysis. Mg(2+) is bound by residues aspartate 14 and glycine 41. Residues 14-17, 39-42, threonine 130, arginine 144, glutamine 225, threonine 240, and arginine 304 contribute to the IMP site; these read DEGK and NAGH. Histidine 42 (proton donor) is an active-site residue. A substrate-binding site is contributed by 300-306; sequence TTTGRSR. GTP contacts are provided by residues arginine 306, 332–334, and 414–416; these read KLD and STG.

It belongs to the adenylosuccinate synthetase family. As to quaternary structure, homodimer. Requires Mg(2+) as cofactor.

Its subcellular location is the cytoplasm. The enzyme catalyses IMP + L-aspartate + GTP = N(6)-(1,2-dicarboxyethyl)-AMP + GDP + phosphate + 2 H(+). It participates in purine metabolism; AMP biosynthesis via de novo pathway; AMP from IMP: step 1/2. In terms of biological role, plays an important role in the de novo pathway of purine nucleotide biosynthesis. Catalyzes the first committed step in the biosynthesis of AMP from IMP. The polypeptide is Adenylosuccinate synthetase (Marinobacter nauticus (strain ATCC 700491 / DSM 11845 / VT8) (Marinobacter aquaeolei)).